The following is a 1071-amino-acid chain: V-type proton ATPase catalytic subunit A (1071 aa).

Residue Ala-2 is modified to N-acetylalanine. Thr-131 carries the post-translational modification Phosphothreonine. 257-264 (GAFGCGKT) contributes to the ATP binding site. A DOD-type homing endonuclease domain is found at 494-642 (LLGLWIGDGL…LVSLARSLGL (149 aa)). Ser-858 and Ser-928 each carry phosphoserine.

The protein belongs to the ATPase alpha/beta chains family. In terms of assembly, V-ATPase is a heteromultimeric enzyme composed of a peripheral catalytic V1 complex (components A to H) attached to an integral membrane V0 proton pore complex (components: a, c, c', c'', d, e, f and VOA1). Interacts with RAV1 and RAV2 components of the RAVE complex, which are essential for the stability and assembly of V-ATPase. In terms of processing, this protein undergoes a protein self splicing that involves a post-translational excision of the VDE intervening region (intein) followed by peptide ligation.

Its subcellular location is the vacuole membrane. It carries out the reaction ATP + H2O + 4 H(+)(in) = ADP + phosphate + 5 H(+)(out). Catalytic subunit of the V1 complex of vacuolar(H+)-ATPase (V-ATPase), a multisubunit enzyme composed of a peripheral complex (V1) that hydrolyzes ATP and a membrane integral complex (V0) that translocates protons. V-ATPase is responsible for acidifying and maintaining the pH of intracellular compartments. Its function is as follows. PI-SceI is an endonuclease that can cleave at a site present in a VMA1 allele that lacks the derived endonuclease segment of the open reading frame; cleavage at this site only occurs during meiosis and initiates 'homing', a genetic event that converts a VMA1 allele lacking VDE into one that contains it. The chain is V-type proton ATPase catalytic subunit A from Saccharomyces cerevisiae (strain ATCC 204508 / S288c) (Baker's yeast).